A 318-amino-acid polypeptide reads, in one-letter code: Glutathione synthetase (318 aa).

The region spanning 125–311 (EKLFTAWFPE…ITGKLMDAIE (187 aa)) is the ATP-grasp domain. An ATP-binding site is contributed by 151–208 (FRQEHGDIILKPLDGMGGASIFRVKENDPNVSVIIETLTNHGQNYAMAQTFVPDISNG). Mg(2+) is bound by residues Glu282 and Asn284.

The protein belongs to the prokaryotic GSH synthase family. Mg(2+) is required as a cofactor. Requires Mn(2+) as cofactor.

The catalysed reaction is gamma-L-glutamyl-L-cysteine + glycine + ATP = glutathione + ADP + phosphate + H(+). It participates in sulfur metabolism; glutathione biosynthesis; glutathione from L-cysteine and L-glutamate: step 2/2. This Vibrio vulnificus (strain YJ016) protein is Glutathione synthetase.